We begin with the raw amino-acid sequence, 169 residues long: S-ribosylhomocysteine lyase (169 aa).

Fe cation contacts are provided by His-54, His-58, and Cys-128.

It belongs to the LuxS family. Homodimer. The cofactor is Fe cation.

The catalysed reaction is S-(5-deoxy-D-ribos-5-yl)-L-homocysteine = (S)-4,5-dihydroxypentane-2,3-dione + L-homocysteine. Its function is as follows. Involved in the synthesis of autoinducer 2 (AI-2) which is secreted by bacteria and is used to communicate both the cell density and the metabolic potential of the environment. The regulation of gene expression in response to changes in cell density is called quorum sensing. Catalyzes the transformation of S-ribosylhomocysteine (RHC) to homocysteine (HC) and 4,5-dihydroxy-2,3-pentadione (DPD). The polypeptide is S-ribosylhomocysteine lyase (Shewanella halifaxensis (strain HAW-EB4)).